The primary structure comprises 353 residues: Photosystem II protein D1 (353 aa).

At T2 the chain carries N-acetylthreonine. T2 carries the post-translational modification Phosphothreonine. Helical transmembrane passes span 29–46 (YIGWFGVLMIPTLLTATS), 118–133 (HFLLGVACYMGREWEL), and 142–156 (WIAVAYSAPVAAATA). H118 contacts chlorophyll a. Residue Y126 coordinates pheophytin a. D170 and E189 together coordinate [CaMn4O5] cluster. Residues 197-218 (FHMLGVAGVFGGSLFSAMHGSL) form a helical membrane-spanning segment. A chlorophyll a-binding site is contributed by H198. A quinone-binding positions include H215 and 264 to 265 (SF). Position 215 (H215) interacts with Fe cation. Position 272 (H272) interacts with Fe cation. A helical transmembrane segment spans residues 274-288 (FLAAWPVVGIWFTAL). H332, E333, D342, and A344 together coordinate [CaMn4O5] cluster. Residues 345–353 (AIEAPATNG) constitute a propeptide that is removed on maturation.

The protein belongs to the reaction center PufL/M/PsbA/D family. PSII is composed of 1 copy each of membrane proteins PsbA, PsbB, PsbC, PsbD, PsbE, PsbF, PsbH, PsbI, PsbJ, PsbK, PsbL, PsbM, PsbT, PsbX, PsbY, PsbZ, Psb30/Ycf12, at least 3 peripheral proteins of the oxygen-evolving complex and a large number of cofactors. It forms dimeric complexes. The D1/D2 heterodimer binds P680, chlorophylls that are the primary electron donor of PSII, and subsequent electron acceptors. It shares a non-heme iron and each subunit binds pheophytin, quinone, additional chlorophylls, carotenoids and lipids. D1 provides most of the ligands for the Mn4-Ca-O5 cluster of the oxygen-evolving complex (OEC). There is also a Cl(-1) ion associated with D1 and D2, which is required for oxygen evolution. The PSII complex binds additional chlorophylls, carotenoids and specific lipids. serves as cofactor. Post-translationally, tyr-161 forms a radical intermediate that is referred to as redox-active TyrZ, YZ or Y-Z. C-terminally processed by CTPA; processing is essential to allow assembly of the oxygen-evolving complex and thus photosynthetic growth.

Its subcellular location is the plastid membrane. It carries out the reaction 2 a plastoquinone + 4 hnu + 2 H2O = 2 a plastoquinol + O2. Its function is as follows. Photosystem II (PSII) is a light-driven water:plastoquinone oxidoreductase that uses light energy to abstract electrons from H(2)O, generating O(2) and a proton gradient subsequently used for ATP formation. It consists of a core antenna complex that captures photons, and an electron transfer chain that converts photonic excitation into a charge separation. The D1/D2 (PsbA/PsbD) reaction center heterodimer binds P680, the primary electron donor of PSII as well as several subsequent electron acceptors. The polypeptide is Photosystem II protein D1 (Cuscuta reflexa (Southern Asian dodder)).